The primary structure comprises 102 residues: Small ribosomal subunit protein uS10 (102 aa).

Belongs to the universal ribosomal protein uS10 family. In terms of assembly, part of the 30S ribosomal subunit.

In terms of biological role, involved in the binding of tRNA to the ribosomes. In Salinispora tropica (strain ATCC BAA-916 / DSM 44818 / JCM 13857 / NBRC 105044 / CNB-440), this protein is Small ribosomal subunit protein uS10.